The following is a 283-amino-acid chain: MEVKIAKTAGFCWGVRRTVDKVMEVADHASGPVVTLGPIIHNPQAVARFREKGVGTVDAVGEVGDGTTVVVRTHGAVKEELDRAEGRGLEVVDGTCPYVKYPQAIAQRLSAEGYHVVIVGDANHAEIKGVISYSEGPCTVVKPGGPIPEIPAKKVAVIAQTTCIGADFEAVVGALALRHKEVRAVNTICNDTEERQADARSLAREVDAVVVVGGKNSANTRHLAEICREIQPRTWHVETEAELRPEWFTGCQVVGLSAGASTPDWVVEGVAGWLRGLHRPGTP.

Cysteine 12 serves as a coordination point for [4Fe-4S] cluster. Histidine 41 and histidine 74 together coordinate (2E)-4-hydroxy-3-methylbut-2-enyl diphosphate. Dimethylallyl diphosphate is bound by residues histidine 41 and histidine 74. Histidine 41 and histidine 74 together coordinate isopentenyl diphosphate. Cysteine 96 serves as a coordination point for [4Fe-4S] cluster. Histidine 124 serves as a coordination point for (2E)-4-hydroxy-3-methylbut-2-enyl diphosphate. Histidine 124 contacts dimethylallyl diphosphate. Histidine 124 is a binding site for isopentenyl diphosphate. The active-site Proton donor is the glutamate 126. Threonine 161 contacts (2E)-4-hydroxy-3-methylbut-2-enyl diphosphate. [4Fe-4S] cluster is bound at residue cysteine 189. The (2E)-4-hydroxy-3-methylbut-2-enyl diphosphate site is built by serine 217, asparagine 219, and serine 261. Dimethylallyl diphosphate is bound by residues serine 217, asparagine 219, and serine 261. 3 residues coordinate isopentenyl diphosphate: serine 217, asparagine 219, and serine 261.

The protein belongs to the IspH family. [4Fe-4S] cluster is required as a cofactor.

It carries out the reaction isopentenyl diphosphate + 2 oxidized [2Fe-2S]-[ferredoxin] + H2O = (2E)-4-hydroxy-3-methylbut-2-enyl diphosphate + 2 reduced [2Fe-2S]-[ferredoxin] + 2 H(+). The catalysed reaction is dimethylallyl diphosphate + 2 oxidized [2Fe-2S]-[ferredoxin] + H2O = (2E)-4-hydroxy-3-methylbut-2-enyl diphosphate + 2 reduced [2Fe-2S]-[ferredoxin] + 2 H(+). It functions in the pathway isoprenoid biosynthesis; dimethylallyl diphosphate biosynthesis; dimethylallyl diphosphate from (2E)-4-hydroxy-3-methylbutenyl diphosphate: step 1/1. It participates in isoprenoid biosynthesis; isopentenyl diphosphate biosynthesis via DXP pathway; isopentenyl diphosphate from 1-deoxy-D-xylulose 5-phosphate: step 6/6. Functionally, catalyzes the conversion of 1-hydroxy-2-methyl-2-(E)-butenyl 4-diphosphate (HMBPP) into a mixture of isopentenyl diphosphate (IPP) and dimethylallyl diphosphate (DMAPP). Acts in the terminal step of the DOXP/MEP pathway for isoprenoid precursor biosynthesis. This Anaeromyxobacter sp. (strain Fw109-5) protein is 4-hydroxy-3-methylbut-2-enyl diphosphate reductase.